Here is a 257-residue protein sequence, read N- to C-terminus: UPF0246 protein Ssed_1188 (257 aa).

The protein belongs to the UPF0246 family.

The chain is UPF0246 protein Ssed_1188 from Shewanella sediminis (strain HAW-EB3).